Reading from the N-terminus, the 144-residue chain is Transmembrane protein 170A (144 aa).

The Extracellular portion of the chain corresponds to Met-1–Val-50. N-linked (GlcNAc...) asparagine glycosylation is found at Asn-30 and Asn-36. A helical transmembrane segment spans residues Phe-51–Phe-71. The Cytoplasmic segment spans residues Thr-72–Ser-85. The chain crosses the membrane as a helical span at residues Ile-86 to Ala-106. Over Gly-107 to Met-116 the chain is Extracellular. A helical membrane pass occupies residues Ile-117–Phe-137. Residues Leu-138 to Leu-144 lie on the Cytoplasmic side of the membrane.

This sequence belongs to the TMEM170 family. In terms of assembly, interacts with RTN4.

Its subcellular location is the endoplasmic reticulum membrane. It is found in the nucleus envelope. Functionally, acts as a regulator of endoplasmic reticulum (ER) and nuclear envelope (NE) morphogenesis. Affects the ratio between tubular ER and ER sheets by promoting sheet formation at the expense of tubules. Influences NE expansion, nuclear pore complex formation and proper localization of inner nuclear membrane proteins. The polypeptide is Transmembrane protein 170A (Tmem170a) (Mus musculus (Mouse)).